The following is a 644-amino-acid chain: Protein cueball (644 aa).

The first 26 residues, 1 to 26, serve as a signal peptide directing secretion; it reads MIRIRFGMDVLLVLLLATCLLSPAHG. Over 27-531 the chain is Extracellular; it reads TPLEWDFAVT…VCLTPKVWTS (505 aa). N-linked (GlcNAc...) asparagine glycosylation is found at asparagine 82 and asparagine 108. 3 LDL-receptor class B repeats span residues 121 to 166, 167 to 211, and 212 to 257; these read MNLF…DVCR, RKLY…DQLS, and DRLF…TNDA. Asparagine 175, asparagine 190, and asparagine 196 each carry an N-linked (GlcNAc...) asparagine glycan. Residue asparagine 313 is glycosylated (N-linked (GlcNAc...) asparagine). 2 EGF-like domains span residues 398–430 and 433–471; these read EIRECHNYCVHGTCQMSESAYPKCYCQPGFTGE and EVSVCAGLCLNGGHCRASKDEKEAPSCECPAKFGGARCE. 5 cysteine pairs are disulfide-bonded: cysteine 402–cysteine 411, cysteine 406–cysteine 421, cysteine 437–cysteine 447, cysteine 441–cysteine 459, and cysteine 461–cysteine 470. Residues asparagine 473 and asparagine 508 are each glycosylated (N-linked (GlcNAc...) asparagine). The chain crosses the membrane as a helical span at residues 532 to 552; sequence SVIIILVIGIVSSLLLVAVIV. The Cytoplasmic segment spans residues 553 to 644; that stretch reads HGIRRLYKPK…LIHNMEDDLY (92 aa).

This sequence belongs to the cueball family.

The protein resides in the cell membrane. Its function is as follows. Has a role in spermatogenesis and oogenesis. The chain is Protein cueball from Drosophila erecta (Fruit fly).